We begin with the raw amino-acid sequence, 104 residues long: Large ribosomal subunit protein bL21 (104 aa).

The protein belongs to the bacterial ribosomal protein bL21 family. Part of the 50S ribosomal subunit. Contacts protein L20.

Its function is as follows. This protein binds to 23S rRNA in the presence of protein L20. The protein is Large ribosomal subunit protein bL21 of Salinispora tropica (strain ATCC BAA-916 / DSM 44818 / JCM 13857 / NBRC 105044 / CNB-440).